We begin with the raw amino-acid sequence, 490 residues long: Glutamyl-tRNA(Gln) amidotransferase subunit A (490 aa).

Residues lysine 79 and serine 154 each act as charge relay system in the active site. Catalysis depends on serine 178, which acts as the Acyl-ester intermediate.

This sequence belongs to the amidase family. GatA subfamily. In terms of assembly, heterotrimer of A, B and C subunits.

The enzyme catalyses L-glutamyl-tRNA(Gln) + L-glutamine + ATP + H2O = L-glutaminyl-tRNA(Gln) + L-glutamate + ADP + phosphate + H(+). In terms of biological role, allows the formation of correctly charged Gln-tRNA(Gln) through the transamidation of misacylated Glu-tRNA(Gln) in organisms which lack glutaminyl-tRNA synthetase. The reaction takes place in the presence of glutamine and ATP through an activated gamma-phospho-Glu-tRNA(Gln). The polypeptide is Glutamyl-tRNA(Gln) amidotransferase subunit A (Roseiflexus castenholzii (strain DSM 13941 / HLO8)).